A 513-amino-acid chain; its full sequence is HTH-type transcriptional regulatory protein TyrR (513 aa).

In terms of domain architecture, ACT spans 2-72; the sequence is RLEVFCEDRL…GVTDVRTVPW (71 aa). Positions 78–114 constitute a PAS domain; that stretch reads EHLALSALLEALPEPVLSVDMKSKVDMANPASCQLFG. The region spanning 206-428 is the Sigma-54 factor interaction domain; it reads IVAVSPKMKH…LKNAIYRALT (223 aa). ATP-binding positions include 234–241 and 290–299; these read GDTGTGKD and ANGGSVLLDE. Positions 482–502 form a DNA-binding region, H-T-H motif; sequence STRKLAKRLGVSHTAIANKLR.

In terms of assembly, homodimer. In presence of tyrosine (or high concentrations of phenylalanine or tryptophan) and ATP, it self-associates to form an hexamer. At low tyrosine concentrations, homodimers can bind to certain recognition sequences referred to as 'strong TyrR boxes'. Homohexamers are the active repressing species, interacting with two or three tyrR boxes in the targeted regulatory DNA, including 'strong TyrR boxes' and lower-affinity sites called 'weak TyrR boxes'.

It localises to the cytoplasm. With respect to regulation, binding of ATP strongly enhances the affinity of TyrR for tyrosine. In terms of biological role, dual transcriptional regulator of the TyrR regulon, which includes a number of genes coding for proteins involved in the biosynthesis or transport of the three aromatic amino acids, phenylalanine, tyrosine and tryptophan. These three aromatic amino acids act as effectors which bind to the TyrR protein to form an active regulatory protein. Modulates the expression of at least eight unlinked transcription units, including aroF, aroG, aroLM, aroP, mtr, tyrA, tyrB and tyrP. In most cases TyrR acts as a repressor, but positive effects have been observed on the tyrP gene, which is repressed in the presence of tyrosine and activated at high phenylalanine concentrations. Is also involved in activation, but not repression, of mtr expression in association with phenylalanine or tyrosine. Acts by binding specifically to TyrR boxes in the promoter region of the target genes. This is HTH-type transcriptional regulatory protein TyrR from Escherichia coli (strain K12).